The chain runs to 1842 residues: Fatty acid synthase alpha subunit pigJ (1842 aa).

The tract at residues 120-184 (GAPVEEEGSK…TPAGGSTTPD (65 aa)) is disordered. Positions 140-175 (SGSSRTATTAKATVTTPSSSSPETAPPAASTPSQGT) are enriched in low complexity. The Carrier domain maps to 184–262 (DIPLSAKHVV…DALQGNFPGK (79 aa)). Serine 222 is modified (O-(pantetheine 4'-phosphoryl)serine). The interval 611–807 (GKTVLVTGAG…CGAAIGWVRG (197 aa)) is beta-ketoacyl reductase. Residues 1058 to 1585 (KEFLQEIVVE…QKGGIAVVVA (528 aa)) form the Ketosynthase family 3 (KS3) domain. Residues cysteine 1244, histidine 1470, and histidine 1511 each act as for beta-ketoacyl synthase activity in the active site. Residues 1649–1672 (KARVGGHPENNNNNNNNSSSKRNT) are disordered. The span at 1658-1668 (NNNNNNNNSSS) shows a compositional bias: low complexity. Aspartate 1725, valine 1726, and glutamate 1727 together coordinate Mg(2+). Acetyl-CoA contacts are provided by residues 1725–1727 (DVE), serine 1761, 1770–1780 (EAVFKSLQTPS), and 1823–1825 (ITH). Mg(2+) contacts are provided by threonine 1824 and histidine 1825.

The protein belongs to the thiolase-like superfamily. Fungal fatty acid synthetase subunit alpha family. As to quaternary structure, [Alpha(6)beta(6)] hexamers of two multifunctional subunits (alpha and beta).

The enzyme catalyses acetyl-CoA + n malonyl-CoA + 2n NADPH + 4n H(+) = a long-chain-acyl-CoA + n CoA + n CO2 + 2n NADP(+).. The catalysed reaction is a fatty acyl-[ACP] + malonyl-[ACP] + H(+) = a 3-oxoacyl-[ACP] + holo-[ACP] + CO2. It carries out the reaction a (3R)-hydroxyacyl-[ACP] + NADP(+) = a 3-oxoacyl-[ACP] + NADPH + H(+). The protein operates within secondary metabolite biosynthesis. In terms of biological role, fatty acid synthase alpha subunit; part of the gene cluster that mediates the biosynthesis of azaphilone pigments (MonAzPs), a complex mixture of compounds with a common azaphilone skeleton very widely used as food colorants. PigJ and pigK form the two subunits of a dedicated fungal fatty acid synthase (FAS) that produces the side chain fatty acyl moiety of MonAzPs, a beta-keto fatty acid. The chain length control of the pigJ-pigK FAS is somewhat flexible as MonAzPs features either a beta-ketooctanoic or a beta-ketodecanoic acid moiety. The beta-ketoacyl-ACP probably serves as the substrate for the acetyltransferase pigD that directly transfers the fatty acyl chain to the C-4 alcohol of the pyran ring. The first step of the pathway is performed by the nrPKS pigA that forms the hexaketide precursor from successive condensations of five malonyl-CoA units, with a simple acetyl-CoA starter unit. The role of esterase pigG is not clear, but it may play at most a supplementary role in the formation of the benzaldehyde produced by the pigA nrPKS. This very reactive benzaldehyde is intercepted by the pigC ketoreductase that to provide the first stable enzyme-free MonAzPs intermediate, 6-(4-hydroxy-2-oxopentyl)-3-methyl-2,4-dioxocyclohexane carbaldehyde, also known as M7PKS-1. The FAD-dependent monooxygenase pigN hydroxylates M7PKS-1 at C-4, which triggers the formation of the pyran ring. PigJ, pigK and pigD are involved in the acetylation of the pyran ring. PigJ and pigK form the two subunits of a dedicated fungal FAS that produces the side chain fatty acyl moiety of MonAzPs and pigD transfers the fatty acyl chain to the C-4 alcohol. PigM and pigO are involved in the elimination of the omega-1 alcohol. PigM acts as an O-acetyltransferase that synthesizes the putative O-11 acetyl intermediate whereas pigO eliminates acetic acid to yield an intermediate with a C10(11) double bond. The dehydration of the C-11 alcohol followed by the reduction of the C6(7) double bond by the NAD(P)H-dependent oxidoreductase pigE increases the electrophilicity of the C-5 ketone of the resulting acyl benzopyran. This in turn sets up the C-5 ketone for an intramolecular Knoevenagel aldol condensation with the C-20 enol of the side chain. This condensation affords the characteristic linear tricyclic carbon skeletons of the yellow pigments that serve as the common precursors for the classical yellow pigments monascin and ankaflavin, orange pigments rubopunctatin and monascorubrin, and red pigments ribropunctamine and monascorubramine. The FAD-dependent oxidoreductase pigF is especially invoved in the biosynthesis of orange and red pigments via desaturation of C6(7). This is Fatty acid synthase alpha subunit pigJ from Monascus ruber (Mold).